A 355-amino-acid polypeptide reads, in one-letter code: Ataxin-3 (355 aa).

Met-1 is covalently cross-linked (Peptide (Met-Gly) (interchain with G-Cter in ubiquitin)). The Josephin domain occupies 1-180; that stretch reads MESIFHEKQE…DCEADQLLQM (180 aa). Cys-14 acts as the Nucleophile in catalysis. His-119 serves as the catalytic Proton acceptor. Asn-134 is a catalytic residue. Residue Lys-200 forms a Glycyl lysine isopeptide (Lys-Gly) (interchain with G-Cter in ubiquitin) linkage. Residue Ser-219 is modified to Phosphoserine. UIM domains are found at residues 224–243 and 244–263; these read EDED…IDME and DEEA…SSRS. The segment covering 257-275 has biased composition (polar residues); that stretch reads MQGSSRSMCENSPQTSSPD. The segment at 257-355 is disordered; that stretch reads MQGSSRSMCE…KDNLKAERKK (99 aa). Residues Ser-268, Ser-272, and Ser-273 each carry the phosphoserine modification. A compositionally biased stretch (basic and acidic residues) spans 279–289; the sequence is EELRRRREAYF. Ser-321 carries the phosphoserine modification. In terms of domain architecture, UIM 3 spans 329–348; that stretch reads SEEDMLRAAVTMSLETAKDN. The span at 344 to 355 shows a compositional bias: basic and acidic residues; sequence TAKDNLKAERKK.

As to quaternary structure, interacts with STUB1/CHIP (when monoubiquitinated). Interacts with DNA repair proteins RAD23A and RAD23B. Interacts with BECN1 (via its poly-Gln domain). Interacts with PRKN, UBR2, VCP and tubulin. Post-translationally, monoubiquitinated by UBE2W, possibly leading to activate the deubiquitinating enzyme activity.

It is found in the nucleus matrix. It localises to the nucleus. The protein resides in the lysosome membrane. The catalysed reaction is Thiol-dependent hydrolysis of ester, thioester, amide, peptide and isopeptide bonds formed by the C-terminal Gly of ubiquitin (a 76-residue protein attached to proteins as an intracellular targeting signal).. In terms of biological role, deubiquitinating enzyme involved in protein homeostasis maintenance, transcription, cytoskeleton regulation, myogenesis and degradation of misfolded chaperone substrates. Binds long polyubiquitin chains and trims them, while it has weak or no activity against chains of 4 or less ubiquitins. Involved in degradation of misfolded chaperone substrates via its interaction with STUB1/CHIP: recruited to monoubiquitinated STUB1/CHIP, and restricts the length of ubiquitin chain attached to STUB1/CHIP substrates and preventing further chain extension. Interacts with key regulators of transcription and represses transcription: acts as a histone-binding protein that regulates transcription. Acts as a negative regulator of mTORC1 signaling in response to amino acid deprivation by mediating deubiquitination of RHEB, thereby promoting RHEB inactivation by the TSC-TBC complex. Regulates autophagy via the deubiquitination of 'Lys-402' of BECN1 leading to the stabilization of BECN1. In Mus musculus (Mouse), this protein is Ataxin-3 (Atxn3).